A 98-amino-acid chain; its full sequence is uncharacterized protein (98 aa).

This is an uncharacterized protein from Invertebrate iridescent virus 6 (IIV-6).